Reading from the N-terminus, the 177-residue chain is Large ribosomal subunit protein uL6 (177 aa).

The protein belongs to the universal ribosomal protein uL6 family. As to quaternary structure, part of the 50S ribosomal subunit.

In terms of biological role, this protein binds to the 23S rRNA, and is important in its secondary structure. It is located near the subunit interface in the base of the L7/L12 stalk, and near the tRNA binding site of the peptidyltransferase center. The sequence is that of Large ribosomal subunit protein uL6 from Yersinia pseudotuberculosis serotype O:1b (strain IP 31758).